The following is a 110-amino-acid chain: uncharacterized protein (110 aa).

Residues 16–46 (ELDKLRECEERLSVIEKQKQSSKQESEETYI) adopt a coiled-coil conformation. Residues 85 to 96 (EEKDKKCQRKPE) show a composition bias toward basic and acidic residues. The segment at 85 to 110 (EEKDKKCQRKPEAPSTPAVTIRSKRQ) is disordered.

This is an uncharacterized protein from Bacillus subtilis (strain 168).